Consider the following 191-residue polypeptide: MAAYSYRPGPGAGPGPAAGAALPDQSFLWNVFQRVDKDRSGVISDTELQQALSNGTWTPFNPVTVRSIISMFDRENKAGVNFSEFTGVWKYITDWQNVFRTYDRDNSGMIDKNELKQALSGFGYRLSDQFHDILIRKFDRQGRGQIAFDDFIQGCIVLQRLTDIFRRYDTDQDGWIQVSYEQYLSMVFSIV.

Alanine 2 carries the post-translational modification N-acetylalanine. 5 EF-hand domains span residues 23–58 (PDQS…GTWT), 59–89 (PFNP…TGVW), 90–125 (KYIT…FGYR), 126–161 (LSDQ…LQRL), and 162–191 (TDIF…FSIV). Ca(2+) contacts are provided by aspartate 36, aspartate 38, serine 40, valine 42, and glutamate 47. Ca(2+)-binding residues include aspartate 103, aspartate 105, serine 107, methionine 109, and glutamate 114. The Mg(2+) site is built by aspartate 169, aspartate 171, aspartate 173, and tryptophan 175.

In terms of assembly, homodimer and heterodimer; heterodimerizes (via the EF-hand 5) with PEF1. Isoform 1 and isoform 2 self-associate; probably forming homodimers. Interacts with CPNE4 (via VWFA domain). Interacts with PDCD6IP; the interaction is calcium-dependent. Interacts with RBM22. Interacts with PLSCR4. Interacts with ANXA7 and TSG101. Interacts with DAPK1. Interacts with SEC31A; the interaction is calcium-dependent and promotes monoubiquitination of SEC31A. Interacts with ANXA11 (via N-terminus); the interaction is calcium-dependent. Interacts with PLSCR3 (via N-terminus); the interaction is calcium-dependent. Interacts with MCOLN1; the interaction is calcium-dependent. Interacts with KDR; the interaction is calcium-dependent. Interacts with HEBP2; the interaction is calcium-dependent. Interacts with TFG. Isoform 1: Interacts with SHISA5, leading to stabilize it. Isoform 2: Does not interact with SHISA5. Isoform 2: Does not interact with PDCD6IP, TSG101, ANXA7 and ANXA11.

It localises to the endoplasmic reticulum membrane. It is found in the cytoplasmic vesicle. The protein resides in the COPII-coated vesicle membrane. The protein localises to the cytoplasm. Its subcellular location is the nucleus. It localises to the endosome. In terms of biological role, calcium sensor that plays a key role in processes such as endoplasmic reticulum (ER)-Golgi vesicular transport, endosomal biogenesis or membrane repair. Acts as an adapter that bridges unrelated proteins or stabilizes weak protein-protein complexes in response to calcium: calcium-binding triggers exposure of apolar surface, promoting interaction with different sets of proteins thanks to 3 different hydrophobic pockets, leading to translocation to membranes. Involved in ER-Golgi transport by promoting the association between PDCD6IP and TSG101, thereby bridging together the ESCRT-III and ESCRT-I complexes. Together with PEF1, acts as a calcium-dependent adapter for the BCR(KLHL12) complex, a complex involved in ER-Golgi transport by regulating the size of COPII coats. In response to cytosolic calcium increase, the heterodimer formed with PEF1 interacts with, and bridges together the BCR(KLHL12) complex and SEC31 (SEC31A or SEC31B), promoting monoubiquitination of SEC31 and subsequent collagen export, which is required for neural crest specification. Involved in the regulation of the distribution and function of MCOLN1 in the endosomal pathway. Promotes localization and polymerization of TFG at endoplasmic reticulum exit site. Required for T-cell receptor-, Fas-, and glucocorticoid-induced apoptosis. May mediate Ca(2+)-regulated signals along the death pathway: interaction with DAPK1 can accelerate apoptotic cell death by increasing caspase-3 activity. Its role in apoptosis may however be indirect, as suggested by knockout experiments. May inhibit KDR/VEGFR2-dependent angiogenesis; the function involves inhibition of VEGF-induced phosphorylation of the Akt signaling pathway. In case of infection by HIV-1 virus, indirectly inhibits HIV-1 production by affecting viral Gag expression and distribution. Has a lower Ca(2+) affinity than isoform 1. The chain is Programmed cell death protein 6 (PDCD6) from Homo sapiens (Human).